Here is a 151-residue protein sequence, read N- to C-terminus: Potassium/proton antiporter CemA (151 aa).

2 helical membrane passes run 7–27 (LPSL…SSSF) and 107–127 (ILHF…FFLG).

This sequence belongs to the CemA family.

Its subcellular location is the plastid. The protein resides in the chloroplast inner membrane. The catalysed reaction is K(+)(in) + H(+)(out) = K(+)(out) + H(+)(in). Its function is as follows. Contributes to K(+)/H(+) antiport activity by supporting proton efflux to control proton extrusion and homeostasis in chloroplasts in a light-dependent manner to modulate photosynthesis. Prevents excessive induction of non-photochemical quenching (NPQ) under continuous-light conditions. Indirectly promotes efficient inorganic carbon uptake into chloroplasts. The chain is Potassium/proton antiporter CemA from Aegilops crassa (Persian goatgrass).